Here is a 657-residue protein sequence, read N- to C-terminus: Matrix metalloproteinase-15 (657 aa).

The signal sequence occupies residues 1-36; the sequence is MGSDRSALGRPGCTGSCLSSRASLLPLLLVLLDCLG. The propeptide occupies 37 to 127; it reads HGTASKDAEV…KANLRRRRKR (91 aa). Positions 105–112 match the Cysteine switch motif; that stretch reads PRCGVPDQ. Zn(2+) is bound at residue Cys107. At 128-614 the chain is on the extracellular side; sequence YTLTGKAWNN…MEEVVRTVNV (487 aa). An N-linked (GlcNAc...) asparagine glycan is attached at Asn146. A Zn(2+)-binding site is contributed by His255. Glu256 is a catalytic residue. Residues His259 and His265 each contribute to the Zn(2+) site. Residues 295 to 365 are disordered; that stretch reads IQQLYGSPDG…ERPDQYGPNI (71 aa). Residues 328-337 are compositionally biased toward pro residues; the sequence is PRPPQPPHPG. 4 Hemopexin repeats span residues 363 to 411, 412 to 457, 459 to 507, and 508 to 555; these read PNIC…WRGL, PGNI…GTDI, YDRI…QGIP, and TSPK…FMGC. A disulfide bridge connects residues Cys366 and Cys555. N-linked (GlcNAc...) asparagine glycosylation occurs at Asn414. A disordered region spans residues 561-599; sequence PRSRWPDVARPPFNPNGGAEPEADGDSKEENAGDKDEGS. Over residues 585 to 599 the composition is skewed to basic and acidic residues; sequence GDSKEENAGDKDEGS. A helical transmembrane segment spans residues 615 to 635; sequence VMVLVPLLLLLCILGLAFALV. The Cytoplasmic segment spans residues 636–657; it reads QMQRKGAPRMLLYCKRSLQEWV.

This sequence belongs to the peptidase M10A family. The cofactor is Zn(2+). Requires Ca(2+) as cofactor. In terms of processing, the precursor is cleaved by a furin endopeptidase.

Its subcellular location is the membrane. In terms of biological role, endopeptidase that degrades various components of the extracellular matrix. May activate progelatinase A. In Mus musculus (Mouse), this protein is Matrix metalloproteinase-15 (Mmp15).